We begin with the raw amino-acid sequence, 172 residues long: Small ribosomal subunit protein uS5 (172 aa).

Positions Leu-17–Val-80 constitute an S5 DRBM domain.

Belongs to the universal ribosomal protein uS5 family. Part of the 30S ribosomal subunit. Contacts proteins S4 and S8.

Functionally, with S4 and S12 plays an important role in translational accuracy. Located at the back of the 30S subunit body where it stabilizes the conformation of the head with respect to the body. In Burkholderia pseudomallei (strain 1106a), this protein is Small ribosomal subunit protein uS5.